The primary structure comprises 147 residues: MVEWTDSERAIITSIFSNLDYEEIGRKSLCRCLIVYPWTQRYFGAFGNLYNAETIMANPLIAAHGTKILHGLDRALKNMDDIKNTYAELSLLHSDKLHVDPDNFRLLADCLTVVIAAKMGSAFTVETQVAWQKFLSVVVSALGRQYH.

The region spanning 3 to 147 is the Globin domain; that stretch reads EWTDSERAII…VVSALGRQYH (145 aa). Positions 64 and 93 each coordinate heme b.

This sequence belongs to the globin family. In terms of assembly, hb 3 is a heterotetramer of two alpha-2 and two beta-2 chains. As to expression, red blood cells.

Involved in oxygen transport from gills to the various peripheral tissues. In Boreogadus saida (Polar cod), this protein is Hemoglobin subunit beta-2 (hbb2).